Consider the following 386-residue polypeptide: Circumsporozoite protein (386 aa).

Positions 1–22 (MKNFILLAVSSILLVDLFPTHC) are cleaved as a signal peptide. The interval 51–304 (HVGQSASRGR…NEGANAPNEK (254 aa)) is disordered. Positions 72–100 (DAKKKKDGKKAEPKNPRENKLKQPGDRAD) are enriched in basic and acidic residues. The tract at residues 80–88 (KKAEPKNPR) is required for the binding to heparan sulfate proteoglycans (HSPGs) on the surface of host hepatocytes. The tract at residues 91–95 (KLKQP) is region I; contains the proteolytic cleavage site. A run of 20 repeats spans residues 96-104 (GDRADGQPA), 105-113 (GDRADGQPA), 114-122 (GDRADGQPA), 123-131 (GDRADGQPA), 132-140 (GDRADGQPA), 141-149 (GDRAAGQPA), 150-158 (GDRADGQPA), 159-167 (GDRADGQPA), 168-176 (GDRAAGQPA), 177-185 (GDRAAGQPA), 186-194 (GDRADGQPA), 195-203 (GDRADGQPA), 204-212 (GDRADGQPA), 213-221 (GDRAAGQPA), 222-230 (GDRAAGQPA), 231-239 (GDRAAGQPA), 240-248 (GDRAAGQPA), 249-257 (GDRAAGQPA), 258-266 (GDRAAGQPA), and 267-275 (GDRAAGQPA). The interval 96–275 (GDRADGQPAG…AGDRAAGQPA (180 aa)) is 20 X 9 AA tandem repeats of G-D-R-A-[AD]-G-Q-P-A. Over residues 275 to 292 (AGNGAGGQAAGGNAGGQG) the composition is skewed to gly residues. Low complexity predominate over residues 293–303 (QNNEGANAPNE). A TSP type-1 domain is found at 312–364 (KVRATVGTEWTPCSVTCGVGVRVRRRVNAANKKPEDLTLNDLETDVCTMDKCA). Cystine bridges form between cysteine 324-cysteine 358 and cysteine 328-cysteine 363. Residue threonine 327 is glycosylated (O-linked (Fuc) threonine). Cysteine 363 is lipidated: GPI-anchor amidated cysteine. The propeptide at 364-386 (AGIFNVVSNSLGLVILLVLALFN) is removed in mature form.

This sequence belongs to the plasmodium circumsporozoite protein family. During host cell invasion, proteolytically cleaved at the cell membrane in the region I by a papain-like cysteine protease of parasite origin. Cleavage is triggered by the sporozoite contact with highly sulfated heparan sulfate proteoglycans (HSPGs) present on the host hepatocyte cell surface. Cleavage exposes the TSP type-1 (TSR) domain and is required for productive invasion of host hepatocytes but not for adhesion to the host cell membrane. Cleavage is dispensable for sporozoite development in the oocyst, motility and for traversal of host and vector cells. Post-translationally, O-glycosylated; maybe by POFUT2.

Its subcellular location is the cell membrane. The protein localises to the cytoplasm. Its function is as follows. Essential sporozoite protein. In the mosquito vector, required for sporozoite development in the oocyst, migration through the vector hemolymph and entry into the vector salivary glands. In the vertebrate host, required for sporozoite migration through the host dermis and infection of host hepatocytes. Binds to highly sulfated heparan sulfate proteoglycans (HSPGs) on the surface of host hepatocytes. In terms of biological role, in the vertebrate host, binds to highly sulfated heparan sulfate proteoglycans (HSPGs) on the surface of host hepatocytes and is required for sporozoite invasion of the host hepatocytes. This chain is Circumsporozoite protein, found in Plasmodium simium.